Consider the following 440-residue polypeptide: Actin-like protein 7A (440 aa).

The segment at 1–27 (MSLDAVWAPQTANIGDGPAKKASDQTS) is disordered. Residues 36 to 56 (ASLRDGPAKRAVWVRRDNAEK) form a required for interaction with TES region.

This sequence belongs to the actin family. As to quaternary structure, interacts (via N-terminus) with TES (via LIM domain 2). Heterodimer with TES; the heterodimer interacts with ENAH to form a heterotrimer. Interacts with ACTL9. Interacts with CYLC1; the interaction may be relevant for proper acrosome attachment to the nuclear envelope. In terms of tissue distribution, detected in testis. Detected at the acrosome of round spermatids (at protein level).

It is found in the cytoplasm. The protein localises to the cytoskeleton. The protein resides in the golgi apparatus. It localises to the nucleus. Its function is as follows. Essential for normal spermatogenesis and male fertility. Required for normal sperm head morphology, acroplaxome formation, acrosome attachment, and acrosome granule stability. May anchor and stabilize acrosomal adherence to the acroplaxome at least in part by facilitating the presence of F-actin in the subacrosomal space. May play an important role in formation and fusion of Golgi-derived vesicles during acrosome biogenesis. In Rattus norvegicus (Rat), this protein is Actin-like protein 7A (Actl7a).